Here is a 389-residue protein sequence, read N- to C-terminus: Chaperone protein DnaJ (389 aa).

The J domain maps to 6–70 (DYYEVLGLAK…QKKAAYDQYG (65 aa)). A CR-type zinc finger spans residues 142–224 (GVEKEIKYNR…CHGTGHEKKA (83 aa)). Cys-155, Cys-158, Cys-172, Cys-175, Cys-198, Cys-201, Cys-212, and Cys-215 together coordinate Zn(2+). CXXCXGXG motif repeat units follow at residues 155–162 (CATCGGNG), 172–179 (CHKCHGSG), 198–205 (CDVCHGTG), and 212–219 (CPTCHGTG).

It belongs to the DnaJ family. Homodimer. The cofactor is Zn(2+).

The protein resides in the cytoplasm. Its function is as follows. Participates actively in the response to hyperosmotic and heat shock by preventing the aggregation of stress-denatured proteins and by disaggregating proteins, also in an autonomous, DnaK-independent fashion. Unfolded proteins bind initially to DnaJ; upon interaction with the DnaJ-bound protein, DnaK hydrolyzes its bound ATP, resulting in the formation of a stable complex. GrpE releases ADP from DnaK; ATP binding to DnaK triggers the release of the substrate protein, thus completing the reaction cycle. Several rounds of ATP-dependent interactions between DnaJ, DnaK and GrpE are required for fully efficient folding. Also involved, together with DnaK and GrpE, in the DNA replication of plasmids through activation of initiation proteins. This Enterococcus faecalis (strain ATCC 700802 / V583) protein is Chaperone protein DnaJ.